We begin with the raw amino-acid sequence, 193 residues long: MASTDKHGDTEYRTSSSTPAPAGVDYFKFDVILRFVLFAASLVAVVVIVTGNQTEVILVPQPVPWPAKFRYTPAFVYFVAALSVTGLYSIITTLASLFASNKPALKTKLLPYFILWDALILGIIASATGTAGGVAYLGLKGNSHVVGWNKICHVYDKFCRHVGASIAVALFGSIVTVLLIWLSAYSIHSRVPK.

The Cytoplasmic portion of the chain corresponds to 1-30 (MASTDKHGDTEYRTSSSTPAPAGVDYFKFD). A helical membrane pass occupies residues 31-51 (VILRFVLFAASLVAVVVIVTG). N-linked (GlcNAc...) asparagine glycosylation is present at Asn-52. Over 52 to 73 (NQTEVILVPQPVPWPAKFRYTP) the chain is Extracellular. Residues 74–94 (AFVYFVAALSVTGLYSIITTL) form a helical membrane-spanning segment. The Cytoplasmic segment spans residues 95 to 108 (ASLFASNKPALKTK). The helical transmembrane segment at 109–129 (LLPYFILWDALILGIIASATG) threads the bilayer. The Extracellular segment spans residues 130–161 (TAGGVAYLGLKGNSHVVGWNKICHVYDKFCRH). The chain crosses the membrane as a helical span at residues 162-182 (VGASIAVALFGSIVTVLLIWL). Topologically, residues 183–193 (SAYSIHSRVPK) are cytoplasmic.

It belongs to the Casparian strip membrane proteins (CASP) family. As to quaternary structure, homodimer and heterodimers.

It localises to the cell membrane. The protein is CASP-like protein 1D1 of Glycine max (Soybean).